Here is a 91-residue protein sequence, read N- to C-terminus: Large ribosomal subunit protein uL23c (91 aa).

It belongs to the universal ribosomal protein uL23 family. Part of the 50S ribosomal subunit.

The protein resides in the plastid. It localises to the chloroplast. Functionally, binds to 23S rRNA. The chain is Large ribosomal subunit protein uL23c (rpl23) from Physcomitrium patens (Spreading-leaved earth moss).